A 61-amino-acid polypeptide reads, in one-letter code: Small ribosomal subunit protein uS14 (61 aa).

Cysteine 24, cysteine 27, cysteine 40, and cysteine 43 together coordinate Zn(2+).

This sequence belongs to the universal ribosomal protein uS14 family. Zinc-binding uS14 subfamily. In terms of assembly, part of the 30S ribosomal subunit. Contacts proteins S3 and S10. Requires Zn(2+) as cofactor.

Functionally, binds 16S rRNA, required for the assembly of 30S particles and may also be responsible for determining the conformation of the 16S rRNA at the A site. This is Small ribosomal subunit protein uS14 from Desulfotalea psychrophila (strain LSv54 / DSM 12343).